The following is a 105-amino-acid chain: NADH-quinone oxidoreductase subunit K (105 aa).

The next 3 helical transmembrane spans lie at Ile7–Val27, Ile34–Phe54, and Phe66–Ile86.

This sequence belongs to the complex I subunit 4L family. As to quaternary structure, NDH-1 is composed of 14 different subunits. Subunits NuoA, H, J, K, L, M, N constitute the membrane sector of the complex.

The protein localises to the cell inner membrane. The enzyme catalyses a quinone + NADH + 5 H(+)(in) = a quinol + NAD(+) + 4 H(+)(out). Functionally, NDH-1 shuttles electrons from NADH, via FMN and iron-sulfur (Fe-S) centers, to quinones in the respiratory chain. The immediate electron acceptor for the enzyme in this species is believed to be a menaquinone. Couples the redox reaction to proton translocation (for every two electrons transferred, four hydrogen ions are translocated across the cytoplasmic membrane), and thus conserves the redox energy in a proton gradient. The polypeptide is NADH-quinone oxidoreductase subunit K (Chlorobaculum parvum (strain DSM 263 / NCIMB 8327) (Chlorobium vibrioforme subsp. thiosulfatophilum)).